Reading from the N-terminus, the 331-residue chain is UDP-GalNAc:beta-1,3-N-acetylgalactosaminyltransferase 1 (331 aa).

At Met1–Trp20 the chain is on the cytoplasmic side. A helical; Signal-anchor for type II membrane protein transmembrane segment spans residues Ser21–Val43. At Ile44–Tyr331 the chain is on the lumenal side. N-linked (GlcNAc...) asparagine glycans are attached at residues Asn72, Asn154, Asn198, Asn212, and Asn326.

The protein belongs to the glycosyltransferase 31 family. Requires Mg(2+) as cofactor. Detected in brain, ovary, kidney, uterus and stomach. In ovary, specifically expressed in follicular granulosa cells and shows particularly strong expression at later stages of follicle development.

The protein resides in the golgi apparatus membrane. It catalyses the reaction a globoside Gb3Cer (d18:1(4E)) + UDP-N-acetyl-alpha-D-galactosamine = a globoside Gb4Cer (d18:1(4E)) + UDP + H(+). Its pathway is protein modification; protein glycosylation. Its function is as follows. Transfers N-acetylgalactosamine onto globotriaosylceramide. Plays a critical role in preimplantation stage embryonic development. This is UDP-GalNAc:beta-1,3-N-acetylgalactosaminyltransferase 1 from Mus musculus (Mouse).